An 88-amino-acid chain; its full sequence is UPF0367 protein syc2447_c (88 aa).

This sequence belongs to the UPF0367 family.

The sequence is that of UPF0367 protein syc2447_c from Synechococcus sp. (strain ATCC 27144 / PCC 6301 / SAUG 1402/1) (Anacystis nidulans).